The primary structure comprises 378 residues: Glutamate 5-kinase (378 aa).

Residue Lys-20 coordinates ATP. The substrate site is built by Ser-60, Asp-147, and Asn-159. Residues 179 to 180 and 221 to 227 contribute to the ATP site; these read TD and TGGMLTK. The 79-residue stretch at 286–364 folds into the PUA domain; the sequence is RGRVVLDDGA…SQIARILGSM (79 aa).

The protein belongs to the glutamate 5-kinase family.

The protein resides in the cytoplasm. The catalysed reaction is L-glutamate + ATP = L-glutamyl 5-phosphate + ADP. The protein operates within amino-acid biosynthesis; L-proline biosynthesis; L-glutamate 5-semialdehyde from L-glutamate: step 1/2. Functionally, catalyzes the transfer of a phosphate group to glutamate to form L-glutamate 5-phosphate. The chain is Glutamate 5-kinase from Bordetella pertussis (strain Tohama I / ATCC BAA-589 / NCTC 13251).